The following is a 286-amino-acid chain: 4-diphosphocytidyl-2-C-methyl-D-erythritol kinase (286 aa).

The active site involves Lys11. 93–103 (PFGAGLGGGSS) lines the ATP pocket. Asp135 is an active-site residue.

Belongs to the GHMP kinase family. IspE subfamily.

The enzyme catalyses 4-CDP-2-C-methyl-D-erythritol + ATP = 4-CDP-2-C-methyl-D-erythritol 2-phosphate + ADP + H(+). Its pathway is isoprenoid biosynthesis; isopentenyl diphosphate biosynthesis via DXP pathway; isopentenyl diphosphate from 1-deoxy-D-xylulose 5-phosphate: step 3/6. Its function is as follows. Catalyzes the phosphorylation of the position 2 hydroxy group of 4-diphosphocytidyl-2C-methyl-D-erythritol. This is 4-diphosphocytidyl-2-C-methyl-D-erythritol kinase from Chlorobium phaeobacteroides (strain BS1).